Consider the following 561-residue polypeptide: Arginine--tRNA ligase (561 aa).

The 'HIGH' region motif lies at 128–138; that stretch reads ANPTGPLHVGH.

It belongs to the class-I aminoacyl-tRNA synthetase family. As to quaternary structure, monomer.

It localises to the cytoplasm. It carries out the reaction tRNA(Arg) + L-arginine + ATP = L-arginyl-tRNA(Arg) + AMP + diphosphate. This Chromohalobacter salexigens (strain ATCC BAA-138 / DSM 3043 / CIP 106854 / NCIMB 13768 / 1H11) protein is Arginine--tRNA ligase.